The chain runs to 227 residues: Lipoprotein-releasing system ATP-binding protein LolD (227 aa).

The ABC transporter domain occupies 7–227 (LSCRNLGKSY…RLEGGRLVEA (221 aa)). 43–50 (GTSGSGKS) lines the ATP pocket.

It belongs to the ABC transporter superfamily. Lipoprotein translocase (TC 3.A.1.125) family. As to quaternary structure, the complex is composed of two ATP-binding proteins (LolD) and two transmembrane proteins (LolC and LolE).

The protein localises to the cell inner membrane. Functionally, part of the ABC transporter complex LolCDE involved in the translocation of mature outer membrane-directed lipoproteins, from the inner membrane to the periplasmic chaperone, LolA. Responsible for the formation of the LolA-lipoprotein complex in an ATP-dependent manner. This is Lipoprotein-releasing system ATP-binding protein LolD from Pseudomonas syringae pv. tomato (strain ATCC BAA-871 / DC3000).